Here is a 100-residue protein sequence, read N- to C-terminus: Replication restart protein PriB (100 aa).

The SSB domain occupies 1-100 (MTNRMELSGT…VLHADNITQI (100 aa)).

The protein belongs to the PriB family. As to quaternary structure, homodimer. Interacts with PriA and DnaT. Component of the replication restart primosome. Primosome assembly occurs via a 'hand-off' mechanism. PriA binds to replication forks, subsequently PriB then DnaT bind; DnaT then displaces ssDNA to generate the helicase loading substrate.

Its function is as follows. Involved in the restart of stalled replication forks, which reloads the replicative helicase on sites other than the origin of replication; the PriA-PriB pathway is the major replication restart pathway. During primosome assembly it facilitates complex formation between PriA and DnaT on DNA; stabilizes PriA on DNA. Stimulates the DNA unwinding activity of PriA helicase. The protein is Replication restart protein PriB of Vibrio parahaemolyticus serotype O3:K6 (strain RIMD 2210633).